The primary structure comprises 152 residues: Superoxide dismutase [Cu-Zn] 2 (152 aa).

Cu cation contacts are provided by H45, H47, and H62. The disordered stretch occupies residues 53–81; that stretch reads TNGSMSTGPHFNPDGKQHGAPEDANRHAG. Residues H62, H70, H79, and D82 each contribute to the Zn(2+) site. Over residues 65–81 the composition is skewed to basic and acidic residues; the sequence is PDGKQHGAPEDANRHAG. Residue H119 coordinates Cu cation.

Belongs to the Cu-Zn superoxide dismutase family. In terms of assembly, homodimer. Cu cation is required as a cofactor. The cofactor is Zn(2+).

The protein resides in the cytoplasm. The catalysed reaction is 2 superoxide + 2 H(+) = H2O2 + O2. Functionally, destroys radicals which are normally produced within the cells and which are toxic to biological systems. The protein is Superoxide dismutase [Cu-Zn] 2 (SODCC2) of Brassica juncea (Indian mustard).